The following is a 120-amino-acid chain: Large ribosomal subunit protein uL18 (120 aa).

It belongs to the universal ribosomal protein uL18 family. As to quaternary structure, part of the 50S ribosomal subunit; part of the 5S rRNA/L5/L18/L25 subcomplex. Contacts the 5S and 23S rRNAs.

Functionally, this is one of the proteins that bind and probably mediate the attachment of the 5S RNA into the large ribosomal subunit, where it forms part of the central protuberance. The chain is Large ribosomal subunit protein uL18 from Treponema denticola (strain ATCC 35405 / DSM 14222 / CIP 103919 / JCM 8153 / KCTC 15104).